A 132-amino-acid polypeptide reads, in one-letter code: Small ribosomal subunit protein uS8 (132 aa).

It belongs to the universal ribosomal protein uS8 family. Part of the 30S ribosomal subunit. Contacts proteins S5 and S12.

One of the primary rRNA binding proteins, it binds directly to 16S rRNA central domain where it helps coordinate assembly of the platform of the 30S subunit. The chain is Small ribosomal subunit protein uS8 from Syntrophobacter fumaroxidans (strain DSM 10017 / MPOB).